A 262-amino-acid chain; its full sequence is ATP synthase subunit a (262 aa).

5 helical membrane passes run 26–46 (VHIDTLFFSILAAVIFLFVFS), 86–106 (VAPLALTIFCWVFIMNAIDLI), 130–150 (DISATLGMSICVFFLILFYTI), 204–226 (LIFILIAVMYSANMAIAALGIPL), and 240–260 (LQAFIFMMLTVVYLSIAYNKA).

It belongs to the ATPase A chain family. In terms of assembly, F-type ATPases have 2 components, CF(1) - the catalytic core - and CF(0) - the membrane proton channel. CF(1) has five subunits: alpha(3), beta(3), gamma(1), delta(1), epsilon(1). CF(0) has three main subunits: a(1), b(2) and c(9-12). The alpha and beta chains form an alternating ring which encloses part of the gamma chain. CF(1) is attached to CF(0) by a central stalk formed by the gamma and epsilon chains, while a peripheral stalk is formed by the delta and b chains.

The protein resides in the cell inner membrane. Its function is as follows. Key component of the proton channel; it plays a direct role in the translocation of protons across the membrane. The chain is ATP synthase subunit a from Haemophilus influenzae (strain PittEE).